Consider the following 274-residue polypeptide: Diaminopimelate epimerase (274 aa).

Substrate-binding residues include Asn-11 and Asn-60. Cys-69 acts as the Proton donor in catalysis. Residues 70–71 (GN), Asn-191, and 209–210 (ER) contribute to the substrate site. The active-site Proton acceptor is Cys-218. 219 to 220 (GS) is a binding site for substrate.

Belongs to the diaminopimelate epimerase family. In terms of assembly, homodimer.

Its subcellular location is the cytoplasm. The catalysed reaction is (2S,6S)-2,6-diaminopimelate = meso-2,6-diaminopimelate. Its pathway is amino-acid biosynthesis; L-lysine biosynthesis via DAP pathway; DL-2,6-diaminopimelate from LL-2,6-diaminopimelate: step 1/1. Functionally, catalyzes the stereoinversion of LL-2,6-diaminopimelate (L,L-DAP) to meso-diaminopimelate (meso-DAP), a precursor of L-lysine and an essential component of the bacterial peptidoglycan. This is Diaminopimelate epimerase from Caldanaerobacter subterraneus subsp. tengcongensis (strain DSM 15242 / JCM 11007 / NBRC 100824 / MB4) (Thermoanaerobacter tengcongensis).